We begin with the raw amino-acid sequence, 117 residues long: Immunoglobulin kappa variable 1D-12 (117 aa).

The signal sequence occupies residues Met-1–Cys-22. The framework-1 stretch occupies residues Asp-23–Cys-45. The 94-residue stretch at Ile-24–Pro-117 folds into the Ig-like domain. Cys-45 and Cys-110 are oxidised to a cystine. A complementarity-determining-1 region spans residues Arg-46–Ala-56. The interval Trp-57–Tyr-71 is framework-2. The complementarity-determining-2 stretch occupies residues Ala-72–Ser-78. Residues Gly-79 to Cys-110 form a framework-3 region. Residues Gln-111–Pro-117 form a complementarity-determining-3 region.

As to quaternary structure, immunoglobulins are composed of two identical heavy chains and two identical light chains; disulfide-linked.

The protein localises to the secreted. It is found in the cell membrane. In terms of biological role, v region of the variable domain of immunoglobulin light chains that participates in the antigen recognition. Immunoglobulins, also known as antibodies, are membrane-bound or secreted glycoproteins produced by B lymphocytes. In the recognition phase of humoral immunity, the membrane-bound immunoglobulins serve as receptors which, upon binding of a specific antigen, trigger the clonal expansion and differentiation of B lymphocytes into immunoglobulins-secreting plasma cells. Secreted immunoglobulins mediate the effector phase of humoral immunity, which results in the elimination of bound antigens. The antigen binding site is formed by the variable domain of one heavy chain, together with that of its associated light chain. Thus, each immunoglobulin has two antigen binding sites with remarkable affinity for a particular antigen. The variable domains are assembled by a process called V-(D)-J rearrangement and can then be subjected to somatic hypermutations which, after exposure to antigen and selection, allow affinity maturation for a particular antigen. This Homo sapiens (Human) protein is Immunoglobulin kappa variable 1D-12.